Here is a 779-residue protein sequence, read N- to C-terminus: Protein zer-1 homolog (779 aa).

Alanine 2 carries the post-translational modification N-acetylalanine. LRR repeat units follow at residues 226 to 245, 246 to 281, and 291 to 315; these read SLVLYNMDLSDDHIRVIVQL, HKLRSKILTCGPHLISSHLDISRDRLSSYYKFKLTR, and LGNLMSLDISGHMILENCSISKTDE. 5 ARM repeats span residues 440 to 480, 524 to 569, 571 to 613, 615 to 656, and 727 to 769; these read RSEQ…NFSI, DNDH…NITD, TPDN…NVAE, KELR…HIMF, and PDKY…HCSN.

The protein belongs to the zyg-11 family. In terms of assembly, interacts with the ELOC-ELOB/Elongin BC complex. Part of an E3 ubiquitin ligase complex including ZER1, CUL2 and Elongin BC.

Functionally, serves as substrate adapter subunit in the E3 ubiquitin ligase complex ZYG11B-CUL2-Elongin BC. Acts redudantly with ZYG11B to target substrates bearing N-terminal glycine degrons for proteasomal degradation. Involved in the clearance of proteolytic fragments generated by caspase cleavage during apoptosis since N-terminal glycine degrons are strongly enriched at caspase cleavage sites. Also important in the quality control of protein N-myristoylation in which N-terminal glycine degrons are conditionally exposed after a failure of N-myristoylation. In Mus musculus (Mouse), this protein is Protein zer-1 homolog.